A 204-amino-acid chain; its full sequence is MAPKIAIIFYSTWGHVQTLAEAEAKGIREAGGSVDLYRVPETLTQEVLTKMHAPPKDDSIPEITDPFILEQYDRFPHGHPTRYGNFPAQWRTFWDRTGGQWQTGAFWGKYAGLFISTGTQGGGQESTALAAMSTLSHHGIIYVPLGYKTTFHLLGDNSEVRGAAVWGAGTFSGGDGSRQPSQKELELTAQGKAFYEAVAKVNFQ.

The 191-residue stretch at 5 to 195 (IAIIFYSTWG…ELTAQGKAFY (191 aa)) folds into the Flavodoxin-like domain.

The protein belongs to the WrbA family.

It localises to the cytoplasm. The protein is Minor allergen Cla h 7 (CLAH7) of Davidiella tassiana (Mycosphaerella tassiana).